The chain runs to 169 residues: Endoribonuclease YbeY (169 aa).

Zn(2+) contacts are provided by His-117, His-121, and His-127.

This sequence belongs to the endoribonuclease YbeY family. It depends on Zn(2+) as a cofactor.

It localises to the cytoplasm. Its function is as follows. Single strand-specific metallo-endoribonuclease involved in late-stage 70S ribosome quality control and in maturation of the 3' terminus of the 16S rRNA. The chain is Endoribonuclease YbeY from Mesoplasma florum (strain ATCC 33453 / NBRC 100688 / NCTC 11704 / L1) (Acholeplasma florum).